The chain runs to 705 residues: Elongation factor G (705 aa).

Positions 8 to 290 constitute a tr-type G domain; sequence ERYRNFGIMA…GVVHLLPSPA (283 aa). Residues 17–24, 88–92, and 142–145 contribute to the GTP site; these read AHIDAGKT, DTPGH, and NKMD. Residues 290 to 309 are disordered; that stretch reads ADRPPVQGIDEDEKEDTRAA.

It belongs to the TRAFAC class translation factor GTPase superfamily. Classic translation factor GTPase family. EF-G/EF-2 subfamily.

It is found in the cytoplasm. In terms of biological role, catalyzes the GTP-dependent ribosomal translocation step during translation elongation. During this step, the ribosome changes from the pre-translocational (PRE) to the post-translocational (POST) state as the newly formed A-site-bound peptidyl-tRNA and P-site-bound deacylated tRNA move to the P and E sites, respectively. Catalyzes the coordinated movement of the two tRNA molecules, the mRNA and conformational changes in the ribosome. In Xanthomonas axonopodis pv. citri (strain 306), this protein is Elongation factor G.